The sequence spans 502 residues: UPF0371 protein CLJ_B0384 (502 aa).

Belongs to the UPF0371 family.

In Clostridium botulinum (strain 657 / Type Ba4), this protein is UPF0371 protein CLJ_B0384.